The chain runs to 161 residues: Thy-1 membrane glycoprotein (161 aa).

A signal peptide spans 1–19 (MNLAISIALLLTVLQVSRG). Gln-20 carries the pyrrolidone carboxylic acid modification. Positions 20–126 (QKVTSLTACL…SQNVTVLRDK (107 aa)) constitute an Ig-like V-type domain. Disulfide bonds link Cys-28–Cys-130 and Cys-38–Cys-104. N-linked (GlcNAc...) asparagine glycans are attached at residues Asn-42 and Asn-79. Ser-82 carries the post-translational modification Phosphoserine. A glycan (N-linked (GlcNAc...) asparagine) is linked at Asn-119. The GPI-anchor amidated cysteine; alternate moiety is linked to residue Cys-130. A propeptide spans 131–161 (EGISLLAQNTSWLXLLLLSLSLLQATDFMSL) (removed in mature form). The N-linked (GlcNAc...) asparagine glycan is linked to Asn-139.

Its subcellular location is the cell membrane. Its function is as follows. May play a role in cell-cell or cell-ligand interactions during synaptogenesis and other events in the brain. This is Thy-1 membrane glycoprotein (THY1) from Macaca mulatta (Rhesus macaque).